A 501-amino-acid chain; its full sequence is Sucrose transport protein SUT2 (501 aa).

At 1–31 (MPRRPSGGGGGAGPAAAAVRKVPLRKLLRAA) the chain is on the cytoplasmic side. A helical membrane pass occupies residues 32–52 (SVACGVQFGWALQLSLLTPYV). The Extracellular segment spans residues 53-55 (QEL). A helical membrane pass occupies residues 56–76 (GIPHAFASLVWLCGPLSGLLV). Residues 77–98 (QPLVGHLSDRIAPAASPLGRRR) are Cytoplasmic-facing. A helical transmembrane segment spans residues 99-119 (PFIAAGAASIAAAVLTVGFSA). Over 120–135 (DLGRIFGDSITPGSTR) the chain is Extracellular. The helical transmembrane segment at 136-156 (LGAIIVYLVGFWLLDVGNNAT) threads the bilayer. The Cytoplasmic portion of the chain corresponds to 157–176 (QGPCRAFLADLTENDPRRTR). Residues 177–197 (IANAYFSLFMALGNILGYATG) traverse the membrane as a helical segment. Residues 198-222 (AYSGWYKIFPFTVTPSCSISCANLK) are Extracellular-facing. The chain crosses the membrane as a helical span at residues 223–243 (SAFLLDIIILVVTTCITVASV). At 244–278 (QEPQSLGSDEADHPSTEQEAFLWELFGSFRYFTLP) the chain is on the cytoplasmic side. A helical transmembrane segment spans residues 279 to 299 (VWMVLIVTALTWIGWFPFILF). At 300 to 327 (DTDWMGREIYRGSPDDPSITQSYHDGVR) the chain is on the extracellular side. Residues 328-348 (MGSFGLMLNSVLLGFTSIVLE) form a helical membrane-spanning segment. The Cytoplasmic segment spans residues 349 to 356 (KLCRKWGA). Residues 357–377 (GLVWGVSNILMALCFVAMLVI) form a helical membrane-spanning segment. The Extracellular segment spans residues 378–394 (TYVAKNMDYPPSGVPPT). The helical transmembrane segment at 395–415 (GIVIASLVVFTILGAPLAITY) threads the bilayer. Topologically, residues 416-433 (SIPYAMAASRVENLGLGQ) are cytoplasmic. A helical transmembrane segment spans residues 434–454 (GLAMGILNLAIVIPQVIVSLG). The Extracellular portion of the chain corresponds to 455-467 (SGPWDQLFGGGNA). Residues 468-488 (PAFAVAAAASFIGGLVAILGL) traverse the membrane as a helical segment. The Cytoplasmic segment spans residues 489-501 (PRARIASRRRGHR).

It belongs to the glycoside-pentoside-hexuronide (GPH) cation symporter transporter (TC 2.A.2.4) family. In terms of assembly, homodimer. As to expression, expressed in source leaf blades.

It is found in the cell membrane. The protein operates within glycan biosynthesis; sucrose metabolism. In terms of biological role, responsible for the transport of sucrose into the cell, with the concomitant uptake of protons (symport system). May also transport other glucosides. This chain is Sucrose transport protein SUT2 (SUT2), found in Oryza sativa subsp. indica (Rice).